A 474-amino-acid chain; its full sequence is MKTRTSRLFRLSALAAGLCLAQAALAADPGAAPSYQALPAGNLCPAAAYDSRYNTKYLGFFTHLVQAQDDWLFRTTYDLRTDFGTSAEGWRELRALRDELKRKGIELVVVYQPTRGLVNREKLSPAEKAGFDYELAKKNYLATIARFRQAGIWTPDFSPLFDEKEEHAYYFKGDHHWTPHGARRSAKIVAETLKQVPGFEEIPKKQFESKRVGLLSKLGTFHKAAAQLCGNSYATQYVDRFETEPVGASDSGDLFGDGGNPQIALVGTSNSGPAYNFAGFLEEFSGADILNNAVSGGGFDSSLLAYMTSEEFHKNPPKILIWEFATHYDMAQKSFYRQAMPLVDNGCSGRKTVLSRKVKLRQGRNEVLLNSAALPIRSGSYVADVTYSDPSVHELKNTIWYMNGRREQLKIEQSKAVDTGGRYVFQLRNDSDWADQQFLSLEIEAPEDMPQGLEVQASICQAAPAKASQSVAGR.

The signal sequence occupies residues 1 to 26; it reads MKTRTSRLFRLSALAAGLCLAQAALA. The segment at 27–347 is SGNH hydrolase-like domain; sequence ADPGAAPSYQ…QAMPLVDNGC (321 aa). Cys-44 and Cys-229 are oxidised to a cystine. Asp-174 is an active-site residue. His-176 acts as the Proton acceptor in catalysis. Residue Ser-269 is the Nucleophile of the active site. A disulfide bridge connects residues Cys-347 and Cys-460. The segment at 348–474 is CBM domain; that stretch reads SGRKTVLSRK…AKASQSVAGR (127 aa).

Belongs to the AlgX family. Monomer. Interacts with AlgK and MucD.

Its subcellular location is the periplasm. It participates in glycan biosynthesis; alginate biosynthesis. Functionally, plays two roles in the biosynthesis of the exopolysaccharide alginate: protects alginate from degradation as the polymer traverses the periplasm, and also plays a role in its O-acetylation. Acetylation of alginate causes the cells in the biofilm to adhere better to lung epithelium, form microcolonies, and resist the effects of the host immune system and/or antibiotics. Displays a low acetylesterase activity in vitro using a pseudosubstrate, 3-carboxyumbelliferyl acetate. Probably has acetyltransferase activity in vivo. The polypeptide is Alginate biosynthesis protein AlgX (algX) (Pseudomonas aeruginosa (strain ATCC 15692 / DSM 22644 / CIP 104116 / JCM 14847 / LMG 12228 / 1C / PRS 101 / PAO1)).